The primary structure comprises 360 residues: Phospho-N-acetylmuramoyl-pentapeptide-transferase (360 aa).

The Periplasmic segment spans residues 1–25 (MLVWLAEHLVKYYSGFNVFSYLTFR). The chain crosses the membrane as a helical span at residues 26–46 (AIVSLLTALFISLWMGPRMIA). The Cytoplasmic segment spans residues 47 to 71 (RLQKLSFGQVVRNDGPESHFSKRGT). The chain crosses the membrane as a helical span at residues 72 to 92 (PTMGGIMILTAIVISVLLWAY). Pro-93 is a topological domain (periplasmic). The helical transmembrane segment at 94-114 (SNPYVWCVLVVLIGYGIIGFV) threads the bilayer. Topologically, residues 115–131 (DDYRKVVRKDTKGLIAR) are cytoplasmic. The chain crosses the membrane as a helical span at residues 132–152 (WKYFWMSVIALGVAFALYLVG). Residues 153-167 (KDTPVTQLVVPFFKD) lie on the Periplasmic side of the membrane. Residues 168-188 (VMPQLGLFYILLSYFVIVGTG) traverse the membrane as a helical segment. Topologically, residues 189 to 198 (NAVNLTDGLD) are cytoplasmic. Residues 199–219 (GLAIMPTVFVAAGFALVAWAT) traverse the membrane as a helical segment. The Periplasmic portion of the chain corresponds to 220–235 (GNMNFANYLHIPYLRH). A helical membrane pass occupies residues 236 to 256 (AGELVIVCTAIVGAGLGFLWF). At 257–262 (NTYPAQ) the chain is on the cytoplasmic side. The chain crosses the membrane as a helical span at residues 263–283 (VFMGDVGSLALGGALGIIAVL). Over 284–287 (LRQE) the chain is Periplasmic. The helical transmembrane segment at 288–308 (FLLVIMGGVFVVETLSVILQV) threads the bilayer. At 309-337 (GSFKLRGQRIFRMAPIHHHYELKGWPEPR) the chain is on the cytoplasmic side. The chain crosses the membrane as a helical span at residues 338 to 358 (VIVRFWIISLMLVLIGLATLK). Over 359-360 (VR) the chain is Periplasmic.

This sequence belongs to the glycosyltransferase 4 family. MraY subfamily. The cofactor is Mg(2+).

Its subcellular location is the cell inner membrane. The catalysed reaction is UDP-N-acetyl-alpha-D-muramoyl-L-alanyl-gamma-D-glutamyl-meso-2,6-diaminopimeloyl-D-alanyl-D-alanine + di-trans,octa-cis-undecaprenyl phosphate = di-trans,octa-cis-undecaprenyl diphospho-N-acetyl-alpha-D-muramoyl-L-alanyl-D-glutamyl-meso-2,6-diaminopimeloyl-D-alanyl-D-alanine + UMP. The protein operates within cell wall biogenesis; peptidoglycan biosynthesis. Functionally, catalyzes the initial step of the lipid cycle reactions in the biosynthesis of the cell wall peptidoglycan: transfers peptidoglycan precursor phospho-MurNAc-pentapeptide from UDP-MurNAc-pentapeptide onto the lipid carrier undecaprenyl phosphate, yielding undecaprenyl-pyrophosphoryl-MurNAc-pentapeptide, known as lipid I. This is Phospho-N-acetylmuramoyl-pentapeptide-transferase from Salmonella paratyphi C (strain RKS4594).